We begin with the raw amino-acid sequence, 693 residues long: UvrABC system protein B (693 aa).

The region spanning 35–188 is the Helicase ATP-binding domain; that stretch reads ERIKNGEKDV…DDLLRKFVSM (154 aa). 48-55 provides a ligand contact to ATP; it reads GATGTGKS. Positions 101–124 match the Beta-hairpin motif; the sequence is YYDYYQPEAYVAQTDTFIEKDSSV. The region spanning 438–604 is the Helicase C-terminal domain; that stretch reads QIDDLLGEIK…PLRKKIADIT (167 aa). Positions 648-683 constitute a UVR domain; sequence VGLIEQLTEQMHAAAGELQFELAARLRDEVGELKKE.

It belongs to the UvrB family. In terms of assembly, forms a heterotetramer with UvrA during the search for lesions. Interacts with UvrC in an incision complex.

It localises to the cytoplasm. Functionally, the UvrABC repair system catalyzes the recognition and processing of DNA lesions. A damage recognition complex composed of 2 UvrA and 2 UvrB subunits scans DNA for abnormalities. Upon binding of the UvrA(2)B(2) complex to a putative damaged site, the DNA wraps around one UvrB monomer. DNA wrap is dependent on ATP binding by UvrB and probably causes local melting of the DNA helix, facilitating insertion of UvrB beta-hairpin between the DNA strands. Then UvrB probes one DNA strand for the presence of a lesion. If a lesion is found the UvrA subunits dissociate and the UvrB-DNA preincision complex is formed. This complex is subsequently bound by UvrC and the second UvrB is released. If no lesion is found, the DNA wraps around the other UvrB subunit that will check the other stand for damage. The sequence is that of UvrABC system protein B from Arthrobacter sp. (strain FB24).